Reading from the N-terminus, the 312-residue chain is TATA box-binding protein-like 2 (312 aa).

Residues 65–115 are disordered; the sequence is DELSTQDEPSQVEKESKNEDSGIYTDCPQKESTQADIDTSNSAQNTSQFNL. Positions 75 to 84 are enriched in basic and acidic residues; that stretch reads QVEKESKNED. Polar residues predominate over residues 94-115; sequence KESTQADIDTSNSAQNTSQFNL.

Belongs to the TBP family. In terms of tissue distribution, in adults, expressed in the gonads, with expression much higher in the ovary than the testis (at protein level). Shows a small amount of expression in other adult organs, including the brain and kidney. Embryonic expression is mostly ubiquitous except in early gastrula embryos where expression is asymmetric.

The protein localises to the nucleus. Functionally, TATA box-binding transcription factor. Members of the TBP family are differentially required to regulate transcription and development during early embryogenesis. Commits mesoderm to the hematopoietic lineage during hemopoiesis, acting via mespa. Binds to the mespa promoter. This chain is TATA box-binding protein-like 2, found in Danio rerio (Zebrafish).